The chain runs to 347 residues: Phenylalanine--tRNA ligase alpha subunit (347 aa).

Glu-261 serves as a coordination point for Mg(2+).

Belongs to the class-II aminoacyl-tRNA synthetase family. Phe-tRNA synthetase alpha subunit type 1 subfamily. Tetramer of two alpha and two beta subunits. It depends on Mg(2+) as a cofactor.

It localises to the cytoplasm. The catalysed reaction is tRNA(Phe) + L-phenylalanine + ATP = L-phenylalanyl-tRNA(Phe) + AMP + diphosphate + H(+). The sequence is that of Phenylalanine--tRNA ligase alpha subunit from Streptococcus pyogenes serotype M1.